We begin with the raw amino-acid sequence, 167 residues long: Large ribosomal subunit protein uL10 (167 aa).

The protein belongs to the universal ribosomal protein uL10 family. Part of the ribosomal stalk of the 50S ribosomal subunit. The N-terminus interacts with L11 and the large rRNA to form the base of the stalk. The C-terminus forms an elongated spine to which L12 dimers bind in a sequential fashion forming a multimeric L10(L12)X complex.

In terms of biological role, forms part of the ribosomal stalk, playing a central role in the interaction of the ribosome with GTP-bound translation factors. The sequence is that of Large ribosomal subunit protein uL10 from Streptococcus mutans serotype c (strain ATCC 700610 / UA159).